We begin with the raw amino-acid sequence, 452 residues long: tRNA modification GTPase MnmE (452 aa).

Residues Arg21, Glu78, and Lys118 each contribute to the (6S)-5-formyl-5,6,7,8-tetrahydrofolate site. The TrmE-type G domain maps to Gly214–Gly375. Asn224 contributes to the K(+) binding site. Residues Asn224–Ser229, Thr243–Thr249, and Asp268–Gly271 contribute to the GTP site. Ser228 contacts Mg(2+). Thr243, Ile245, and Thr248 together coordinate K(+). Residue Thr249 participates in Mg(2+) binding. Lys452 lines the (6S)-5-formyl-5,6,7,8-tetrahydrofolate pocket.

The protein belongs to the TRAFAC class TrmE-Era-EngA-EngB-Septin-like GTPase superfamily. TrmE GTPase family. Homodimer. Heterotetramer of two MnmE and two MnmG subunits. It depends on K(+) as a cofactor.

The protein resides in the cytoplasm. Functionally, exhibits a very high intrinsic GTPase hydrolysis rate. Involved in the addition of a carboxymethylaminomethyl (cmnm) group at the wobble position (U34) of certain tRNAs, forming tRNA-cmnm(5)s(2)U34. This chain is tRNA modification GTPase MnmE, found in Haemophilus influenzae (strain 86-028NP).